The chain runs to 159 residues: MSSEVSSDNPIYGPFFGVMGAASAIIFSALGAAYGTAKSGTGIAAMSVMRPELIMKSIIPVVMAGIIAIYGLVVAVLIAGALEEPSKYSLYRGFIHLGAGLAVGFSGLAAGFAIGIVGDAGVRGTAQQPRLFVGMILILIFAEVLGLYGLIVAIYLYTK.

Topologically, residues 1–12 are lumenal; it reads MSSEVSSDNPIY. A helical transmembrane segment spans residues 13–35; the sequence is GPFFGVMGAASAIIFSALGAAYG. At 36–57 the chain is on the cytoplasmic side; the sequence is TAKSGTGIAAMSVMRPELIMKS. The helical transmembrane segment at 58–78 threads the bilayer; sequence IIPVVMAGIIAIYGLVVAVLI. The Lumenal segment spans residues 79–96; it reads AGALEEPSKYSLYRGFIH. The chain crosses the membrane as a helical span at residues 97-118; that stretch reads LGAGLAVGFSGLAAGFAIGIVG. Residues 119–130 are Cytoplasmic-facing; that stretch reads DAGVRGTAQQPR. A helical membrane pass occupies residues 131–156; sequence LFVGMILILIFAEVLGLYGLIVAIYL. The Lumenal segment spans residues 157–159; sequence YTK.

It belongs to the V-ATPase proteolipid subunit family. In terms of assembly, V-ATPase is a heteromultimeric enzyme made up of two complexes: the ATP-hydrolytic V1 complex and the proton translocation V0 complex. The V1 complex consists of three catalytic AB heterodimers that form a heterohexamer, three peripheral stalks each consisting of EG heterodimers, one central rotor including subunits D and F, and the regulatory subunits C and H. The proton translocation complex V0 consists of the proton transport subunit a, a ring of proteolipid subunits c9c'', rotary subunit d, subunits e and f, and the accessory subunits VhaAC45 and ATP6AP2. In terms of tissue distribution, expressed in the larval middle mid-gut; predominantly in the copper cell region with lower levels of expression in the interstitial cells.

It is found in the membrane. In terms of biological role, proton-conducting pore forming subunit of the V0 complex of vacuolar(H+)-ATPase (V-ATPase), a multisubunit enzyme composed of a peripheral complex (V1) that hydrolyzes ATP and a membrane integral complex (V0) that translocates protons. V-ATPase is responsible for acidifying and maintaining the pH of intracellular compartments and in some cell types, is targeted to the plasma membrane, where it is responsible for acidifying the extracellular environment. In enterocytes, acts as part of a pHCl-2 sensory pathway which mediates Tor-dependent larval growth and metabolism in response to zinc availability. Likely acts in maintaining enterocyte lysosomal acidification which consequently promotes Tor activation at the lysosome membrane. The polypeptide is V-type proton ATPase 16 kDa proteolipid subunit c (Vha16-1) (Drosophila melanogaster (Fruit fly)).